A 272-amino-acid polypeptide reads, in one-letter code: Dihydropteroate synthase (272 aa).

The 256-residue stretch at 1 to 256 (MIKTKIMGIL…NVLLNTRLAQ (256 aa)) folds into the Pterin-binding domain. A Mg(2+)-binding site is contributed by asparagine 11. Residues threonine 51, aspartate 89, asparagine 108, aspartate 172, lysine 208, and 244–246 (RVH) contribute to the (7,8-dihydropterin-6-yl)methyl diphosphate site.

The protein belongs to the DHPS family. In terms of assembly, homodimer. Requires Mg(2+) as cofactor.

It catalyses the reaction (7,8-dihydropterin-6-yl)methyl diphosphate + 4-aminobenzoate = 7,8-dihydropteroate + diphosphate. The protein operates within cofactor biosynthesis; tetrahydrofolate biosynthesis; 7,8-dihydrofolate from 2-amino-4-hydroxy-6-hydroxymethyl-7,8-dihydropteridine diphosphate and 4-aminobenzoate: step 1/2. Catalyzes the condensation of para-aminobenzoate (pABA) with 6-hydroxymethyl-7,8-dihydropterin diphosphate (DHPt-PP) to form 7,8-dihydropteroate (H2Pte), the immediate precursor of folate derivatives. In Staphylococcus epidermidis (strain ATCC 12228 / FDA PCI 1200), this protein is Dihydropteroate synthase (folP).